We begin with the raw amino-acid sequence, 160 residues long: H/ACA ribonucleoprotein complex subunit 2-like protein (160 aa).

Belongs to the eukaryotic ribosomal protein eL8 family. In terms of assembly, component of the small nucleolar ribonucleoprotein particle containing H/ACA-type snoRNAs (H/ACA snoRNPs).

It is found in the nucleus. It localises to the nucleolus. In terms of biological role, required for ribosome biogenesis. Part of a complex which catalyzes pseudouridylation of rRNA. This involves the isomerization of uridine such that the ribose is subsequently attached to C5, instead of the normal N1. Pseudouridine ('psi') residues may serve to stabilize the conformation of rRNAs. This is H/ACA ribonucleoprotein complex subunit 2-like protein (NHP2) from Drosophila yakuba (Fruit fly).